Consider the following 214-residue polypeptide: Adenylate kinase (214 aa).

10-15 contacts ATP; that stretch reads GAGKGT. The segment at 30–59 is NMP; that stretch reads STGDMFRAAIKEGTELGKQAKALMDEGKLV. AMP is bound by residues T31, R36, 57-59, 85-88, and Q92; these read KLV and GFPR. The tract at residues 122 to 159 is LID; it reads GRRVHQPSGRTYHVVYNPPKVEGKDDVTGEDLIIRQDD. Residues R123 and 132–133 contribute to the ATP site; that span reads TY. AMP-binding residues include R156 and R167. Residue K200 participates in ATP binding.

It belongs to the adenylate kinase family. Monomer.

Its subcellular location is the cytoplasm. It catalyses the reaction AMP + ATP = 2 ADP. Its pathway is purine metabolism; AMP biosynthesis via salvage pathway; AMP from ADP: step 1/1. Its function is as follows. Catalyzes the reversible transfer of the terminal phosphate group between ATP and AMP. Plays an important role in cellular energy homeostasis and in adenine nucleotide metabolism. This chain is Adenylate kinase, found in Actinobacillus pleuropneumoniae serotype 5b (strain L20).